Reading from the N-terminus, the 287-residue chain is Bifunctional protein FolD (287 aa).

NADP(+) contacts are provided by residues 171 to 173 (GHS), Ile196, and Ile237.

It belongs to the tetrahydrofolate dehydrogenase/cyclohydrolase family. As to quaternary structure, homodimer.

It catalyses the reaction (6R)-5,10-methylene-5,6,7,8-tetrahydrofolate + NADP(+) = (6R)-5,10-methenyltetrahydrofolate + NADPH. The enzyme catalyses (6R)-5,10-methenyltetrahydrofolate + H2O = (6R)-10-formyltetrahydrofolate + H(+). It participates in one-carbon metabolism; tetrahydrofolate interconversion. Functionally, catalyzes the oxidation of 5,10-methylenetetrahydrofolate to 5,10-methenyltetrahydrofolate and then the hydrolysis of 5,10-methenyltetrahydrofolate to 10-formyltetrahydrofolate. This Methanosarcina mazei (strain ATCC BAA-159 / DSM 3647 / Goe1 / Go1 / JCM 11833 / OCM 88) (Methanosarcina frisia) protein is Bifunctional protein FolD.